We begin with the raw amino-acid sequence, 344 residues long: MLVLGIESSCDETGLALYDTGAGLLAHALHSQIAMHRDYGGVVPELASRDHIRRVLPLLEQVLADAGRTRQDIDAIAFTQGPGLAGALLVGASVANALGFALNVPMVGVHHLEGHLLSPLLTREPPPFPFVALLVSGGHTQLMEVRGIGDYTLLGETLDDAAGEAFDKTAKLLGLGYPGGPEVSRLAEFGIPGAFALPRPMLHSGNLDFSFAGLKTAVLTQTRKLANTCEQDRANLARAFVDAIVDVLAAKSMAALKQTGHKRLVVAGGVGANRQLRERLDQMGKQRKIDVYYPDLAFCTDNGAMIAFAGAMRLQAAPELARHEYGYGVTPRWDLADIRLPSAA.

Fe cation contacts are provided by His-111 and His-115. Residues 134 to 138 (LVSGG), Asp-167, Gly-180, and Asn-273 each bind substrate. Asp-301 is a Fe cation binding site.

This sequence belongs to the KAE1 / TsaD family. It depends on Fe(2+) as a cofactor.

The protein resides in the cytoplasm. The enzyme catalyses L-threonylcarbamoyladenylate + adenosine(37) in tRNA = N(6)-L-threonylcarbamoyladenosine(37) in tRNA + AMP + H(+). Functionally, required for the formation of a threonylcarbamoyl group on adenosine at position 37 (t(6)A37) in tRNAs that read codons beginning with adenine. Is involved in the transfer of the threonylcarbamoyl moiety of threonylcarbamoyl-AMP (TC-AMP) to the N6 group of A37, together with TsaE and TsaB. TsaD likely plays a direct catalytic role in this reaction. This Cupriavidus necator (strain ATCC 17699 / DSM 428 / KCTC 22496 / NCIMB 10442 / H16 / Stanier 337) (Ralstonia eutropha) protein is tRNA N6-adenosine threonylcarbamoyltransferase.